Reading from the N-terminus, the 430-residue chain is Adenylosuccinate synthetase (430 aa).

GTP contacts are provided by residues 12-18 (GDEGKGK) and 40-42 (GHT). The active-site Proton acceptor is the aspartate 13. Mg(2+) is bound by residues aspartate 13 and glycine 40. IMP-binding positions include 13 to 16 (DEGK), 38 to 41 (NAGH), threonine 129, arginine 143, glutamine 224, threonine 239, and arginine 303. Histidine 41 (proton donor) is an active-site residue. 299-305 (TVSNRKR) contacts substrate. GTP-binding positions include arginine 305, 331–333 (KLD), and 413–415 (STG).

The protein belongs to the adenylosuccinate synthetase family. As to quaternary structure, homodimer. Mg(2+) serves as cofactor.

The protein resides in the cytoplasm. The enzyme catalyses IMP + L-aspartate + GTP = N(6)-(1,2-dicarboxyethyl)-AMP + GDP + phosphate + 2 H(+). The protein operates within purine metabolism; AMP biosynthesis via de novo pathway; AMP from IMP: step 1/2. Its function is as follows. Plays an important role in the de novo pathway of purine nucleotide biosynthesis. Catalyzes the first committed step in the biosynthesis of AMP from IMP. This chain is Adenylosuccinate synthetase, found in Ehrlichia chaffeensis (strain ATCC CRL-10679 / Arkansas).